Here is a 200-residue protein sequence, read N- to C-terminus: Probable GTP-binding protein EngB (200 aa).

The EngB-type G domain occupies 26-200 (SIPEIAIAGR…IYEIAQCIKK (175 aa)). Residues 34-41 (GRSNVGKS), 61-65 (GCTKQ), 80-83 (DLPG), 147-150 (TKID), and 176-179 (VISA) each bind GTP. Residues serine 41 and threonine 63 each coordinate Mg(2+).

This sequence belongs to the TRAFAC class TrmE-Era-EngA-EngB-Septin-like GTPase superfamily. EngB GTPase family. It depends on Mg(2+) as a cofactor.

Necessary for normal cell division and for the maintenance of normal septation. This Ehrlichia canis (strain Jake) protein is Probable GTP-binding protein EngB.